The primary structure comprises 447 residues: MDSSNVEENLNPETKSAEEQNPLAIFHSSLPIASLSLTLFPSSTQFLKLFAHHPNKVKIPTQASSLTHLSLSSVSPFPSSRISFKSTIAANPLQSPLSIVPRRPVDPSSAAALRRAAVVWFRNDLRVHDNECLNSANDECVSVLPVYCFDPRDYGKSSSGFDKTGPFRAQFLIESVSELRKNLQARGSNLVVRVGKPEAVLVELAKEIGADAVYAHREVSHDEVKAEGKIETAMKEEGVEVKYFWGSTLYHLDDLPFKIEDLPSNYGAFKDKVQKLEIRKTIAALDQLKSLPSRGDVELGDIPSLLDLGISPTPRTSQEGKPTMVGGETEALTRLKSFAADCQARLSKGNQKGGNNSVFGANFSCKISPWLAMGSISPRSMFDELKKTISASTTSTTPRNGPGDTGLNWLMYELLWRDFFRFITKKYSSAKTQVEAGPATACTGAFA.

Residues 1–14 (MDSSNVEENLNPET) are compositionally biased toward polar residues. The tract at residues 1–20 (MDSSNVEENLNPETKSAEEQ) is disordered. A Photolyase/cryptochrome alpha/beta domain is found at 115-249 (RAAVVWFRND…EVKYFWGSTL (135 aa)).

Belongs to the DNA photolyase class-1 family. FAD is required as a cofactor.

The chain is Blue-light photoreceptor PHR2 (PHR2) from Arabidopsis thaliana (Mouse-ear cress).